A 453-amino-acid polypeptide reads, in one-letter code: Bifunctional protein GlmU (453 aa).

Residues 1-225 are pyrophosphorylase; sequence MNIVILAAGT…EWETLGVNSK (225 aa). UDP-N-acetyl-alpha-D-glucosamine contacts are provided by residues 6–9, lysine 20, glutamine 71, 76–77, 98–100, glycine 135, glutamate 150, asparagine 165, and asparagine 223; these read LAAG, GT, and YGD. Aspartate 100 is a binding site for Mg(2+). Asparagine 223 is a binding site for Mg(2+). Residues 226 to 246 form a linker region; that stretch reads AQLAELERIHQRKLAEALLAD. The tract at residues 247-453 is N-acetyltransferase; that stretch reads GVTLADPARI…GYVRPVKKKS (207 aa). The UDP-N-acetyl-alpha-D-glucosamine site is built by arginine 329 and lysine 347. Histidine 359 acts as the Proton acceptor in catalysis. UDP-N-acetyl-alpha-D-glucosamine-binding residues include tyrosine 362 and asparagine 373. Acetyl-CoA contacts are provided by residues alanine 376, 382–383, serine 401, and alanine 419; that span reads NY.

It in the N-terminal section; belongs to the N-acetylglucosamine-1-phosphate uridyltransferase family. In the C-terminal section; belongs to the transferase hexapeptide repeat family. In terms of assembly, homotrimer. Mg(2+) serves as cofactor.

It is found in the cytoplasm. The catalysed reaction is alpha-D-glucosamine 1-phosphate + acetyl-CoA = N-acetyl-alpha-D-glucosamine 1-phosphate + CoA + H(+). The enzyme catalyses N-acetyl-alpha-D-glucosamine 1-phosphate + UTP + H(+) = UDP-N-acetyl-alpha-D-glucosamine + diphosphate. Its pathway is nucleotide-sugar biosynthesis; UDP-N-acetyl-alpha-D-glucosamine biosynthesis; N-acetyl-alpha-D-glucosamine 1-phosphate from alpha-D-glucosamine 6-phosphate (route II): step 2/2. The protein operates within nucleotide-sugar biosynthesis; UDP-N-acetyl-alpha-D-glucosamine biosynthesis; UDP-N-acetyl-alpha-D-glucosamine from N-acetyl-alpha-D-glucosamine 1-phosphate: step 1/1. It functions in the pathway bacterial outer membrane biogenesis; LPS lipid A biosynthesis. Catalyzes the last two sequential reactions in the de novo biosynthetic pathway for UDP-N-acetylglucosamine (UDP-GlcNAc). The C-terminal domain catalyzes the transfer of acetyl group from acetyl coenzyme A to glucosamine-1-phosphate (GlcN-1-P) to produce N-acetylglucosamine-1-phosphate (GlcNAc-1-P), which is converted into UDP-GlcNAc by the transfer of uridine 5-monophosphate (from uridine 5-triphosphate), a reaction catalyzed by the N-terminal domain. The protein is Bifunctional protein GlmU of Burkholderia thailandensis (strain ATCC 700388 / DSM 13276 / CCUG 48851 / CIP 106301 / E264).